The following is a 250-amino-acid chain: Probable transcriptional regulatory protein DP2908 (250 aa).

It belongs to the TACO1 family.

Its subcellular location is the cytoplasm. The polypeptide is Probable transcriptional regulatory protein DP2908 (Desulfotalea psychrophila (strain LSv54 / DSM 12343)).